We begin with the raw amino-acid sequence, 515 residues long: G-protein coupled receptor 176 (515 aa).

The Extracellular segment spans residues 1–41; the sequence is MGHNSSWVSPNTSHPRNTSGAEAGANLSAFGELSEAQLYRQ. N4, N11, N17, and N26 each carry an N-linked (GlcNAc...) asparagine glycan. The chain crosses the membrane as a helical span at residues 42–64; sequence FTTTVQVVIFIGSLLGNFMVLWS. Residues 65–77 lie on the Cytoplasmic side of the membrane; that stretch reads TCRTTVFKSVTNR. The chain crosses the membrane as a helical span at residues 78–98; it reads FIKNLACSGICASVVCVPFDI. Over 99 to 108 the chain is Extracellular; the sequence is ILSSSPHCCW. The chain crosses the membrane as a helical span at residues 109-129; the sequence is WIYTMLFCKVLKFLHKVFCSV. Residues 130 to 157 are Cytoplasmic-facing; the sequence is TVLSFPAIALDRYYSVLYPLERKISDAK. Residues 158–177 form a helical membrane-spanning segment; the sequence is SRELVMYIWAHAVVASVPVF. Topologically, residues 178–204 are extracellular; the sequence is AVTNVADIYAMSTCTEVWSNSLGHLVY. The helical transmembrane segment at 205–225 threads the bilayer; sequence VLIYNVTTVIVPVAVVFLFLI. The Cytoplasmic segment spans residues 226 to 264; that stretch reads LIRRALSASQKKKVIIAALRTPQNTISIPYASQREAELH. The chain crosses the membrane as a helical span at residues 265–285; it reads ATLLSMVTVFILCSVPYATLV. Residues 286–301 lie on the Extracellular side of the membrane; that stretch reads VYQTVLNVPNTSVFLL. The chain crosses the membrane as a helical span at residues 302–322; it reads LTAIWLPKVSLLANPVLFLTV. Residues 323-515 lie on the Cytoplasmic side of the membrane; it reads NKSVRKCLVG…KVSIFPKVDS (193 aa). The tract at residues 407–435 is disordered; sequence SCPEGEQEPPQLAPSVPPPGTVDSEPRVS. A compositionally biased stretch (pro residues) spans 417–426; the sequence is QLAPSVPPPG.

Belongs to the G-protein coupled receptor 1 family. Expressed mainly in the brain, with prominent expression in the SCN (at protein level).

The protein resides in the cell membrane. Its function is as follows. Orphan receptor involved in normal circadian rhythm behavior. Acts through the G-protein subclass G(z)-alpha and has an agonist-independent basal activity to repress cAMP production. This is G-protein coupled receptor 176 (Gpr176) from Mus musculus (Mouse).